The sequence spans 173 residues: Archaemetzincin (173 aa).

Residue H130 coordinates Zn(2+). E131 serves as the catalytic Proton acceptor. Positions 134, 140, 141, 146, 165, and 168 each coordinate Zn(2+).

The protein belongs to the peptidase M54 family. In terms of assembly, monomer. Zn(2+) serves as cofactor.

In terms of biological role, probable zinc metalloprotease whose natural substrate is unknown. The protein is Archaemetzincin of Haloarcula marismortui (strain ATCC 43049 / DSM 3752 / JCM 8966 / VKM B-1809) (Halobacterium marismortui).